We begin with the raw amino-acid sequence, 461 residues long: Steroidogenic factor 1 (461 aa).

A DNA-binding region (nuclear receptor) is located at residues aspartate 10–alanine 85. Residues cysteine 13–cysteine 33 form an NR C4-type zinc finger. Lysine 34, lysine 38, and lysine 72 each carry N6-acetyllysine. The segment at cysteine 49 to cysteine 73 adopts an NR C4-type zinc-finger fold. The segment at asparagine 116–alanine 158 is disordered. A Glycyl lysine isopeptide (Lys-Gly) (interchain with G-Cter in SUMO) cross-link involves residue lysine 119. A compositionally biased stretch (pro residues) spans valine 126–tyrosine 138. A Glycyl lysine isopeptide (Lys-Gly) (interchain with G-Cter in SUMO) cross-link involves residue lysine 194. Serine 203 carries the post-translational modification Phosphoserine; by CDK7. One can recognise an NR LBD domain in the interval glycine 222–lysine 459. Residues leucine 230 to threonine 461 are important for dimerization. The a 1,2-diacyl-sn-glycero-3-phosphocholine site is built by glycine 341, tyrosine 436, and lysine 440.

The protein belongs to the nuclear hormone receptor family. NR5 subfamily. In terms of assembly, binds DNA as a monomer. Part of a complex consisting of SFPQ, NONO and NR5A1. Interacts with NR0B2. Interacts with DGKQ and CDK7. Binds to and activated by HIPK3. Post-translationally, may be regulated by phosphorylation and dephosphorylation. In terms of processing, acetylation stimulates the transcriptional activity. Sumoylation reduces CDK7-mediated phosphorylation on Ser-203. Post-translationally, phosphorylated on Ser-203 by CDK7. This phosphorylation promotes transcriptional activity. As to expression, adrenal, ovary, testis, placenta, adipocyte, and brain.

Its subcellular location is the nucleus. In terms of biological role, transcriptional activator. Seems to be essential for sexual differentiation and formation of the primary steroidogenic tissues. Binds to the Ad4 site found in the promoter region of steroidogenic P450 genes such as CYP11A, CYP11B and CYP21B. Also regulates the AMH/Muellerian inhibiting substance gene as well as the AHCH and STAR genes. 5'-YCAAGGYC-3' and 5'-RRAGGTCA-3' are the consensus sequences for the recognition by NR5A1. The SFPQ-NONO-NR5A1 complex binds to the CYP17 promoter and regulates basal and cAMP-dependent transcriptional activity. Binds phospholipids with a phosphatidylinositol (PI) headgroup, in particular PI(3,4)P2 and PI(3,4,5)P3. Activated by the phosphorylation of NR5A1 by HIPK3 leading to increased steroidogenic gene expression upon cAMP signaling pathway stimulation. This is Steroidogenic factor 1 (NR5A1) from Bos taurus (Bovine).